The sequence spans 287 residues: Proteasome assembly chaperone 1 (287 aa).

Residues 1-32 (MATFFGEVQSVFSRAVDEDDEEEEGEEEEEDR) are disordered. Acidic residues predominate over residues 17–32 (DEDDEEEEGEEEEEDR).

Belongs to the PSMG1 family. As to quaternary structure, forms a heterodimer with psmg2. In terms of processing, degraded by the proteasome upon completion of 20S proteasome maturation.

The protein localises to the cytoplasm. The protein resides in the endoplasmic reticulum. In terms of biological role, chaperone protein which promotes assembly of the 20S proteasome as part of a heterodimer with psmg2. The sequence is that of Proteasome assembly chaperone 1 from Xenopus tropicalis (Western clawed frog).